Here is a 360-residue protein sequence, read N- to C-terminus: Phospho-N-acetylmuramoyl-pentapeptide-transferase (360 aa).

Transmembrane regions (helical) follow at residues 21 to 41, 74 to 94, 97 to 117, 134 to 154, 168 to 188, 199 to 219, 236 to 256, 263 to 283, 288 to 308, and 338 to 358; these read YVTF…LWWG, MGGI…GDLG, YVWV…IDDY, YILQ…SADM, IMPQ…VGSS, GLAI…AYLS, AGEL…FLWF, VFMG…IAVL, ILLV…ILQV, and VIVR…ATLK.

Belongs to the glycosyltransferase 4 family. MraY subfamily. Mg(2+) serves as cofactor.

The protein localises to the cell inner membrane. The enzyme catalyses UDP-N-acetyl-alpha-D-muramoyl-L-alanyl-gamma-D-glutamyl-meso-2,6-diaminopimeloyl-D-alanyl-D-alanine + di-trans,octa-cis-undecaprenyl phosphate = di-trans,octa-cis-undecaprenyl diphospho-N-acetyl-alpha-D-muramoyl-L-alanyl-D-glutamyl-meso-2,6-diaminopimeloyl-D-alanyl-D-alanine + UMP. The protein operates within cell wall biogenesis; peptidoglycan biosynthesis. Functionally, catalyzes the initial step of the lipid cycle reactions in the biosynthesis of the cell wall peptidoglycan: transfers peptidoglycan precursor phospho-MurNAc-pentapeptide from UDP-MurNAc-pentapeptide onto the lipid carrier undecaprenyl phosphate, yielding undecaprenyl-pyrophosphoryl-MurNAc-pentapeptide, known as lipid I. The chain is Phospho-N-acetylmuramoyl-pentapeptide-transferase from Shewanella woodyi (strain ATCC 51908 / MS32).